Here is a 228-residue protein sequence, read N- to C-terminus: UPF0173 metal-dependent hydrolase Smar_0891 (228 aa).

This sequence belongs to the UPF0173 family.

The chain is UPF0173 metal-dependent hydrolase Smar_0891 from Staphylothermus marinus (strain ATCC 43588 / DSM 3639 / JCM 9404 / F1).